We begin with the raw amino-acid sequence, 656 residues long: Threonine--tRNA ligase (656 aa).

In terms of domain architecture, TGS spans 1-64; the sequence is MAEAASLTFP…ERSGKIEIIT (64 aa). Residues 246–548 are catalytic; that stretch reads DHRRLGREMD…LIENYAGHFP (303 aa). Zn(2+) is bound by residues Cys342, His393, and His525.

The protein belongs to the class-II aminoacyl-tRNA synthetase family. As to quaternary structure, homodimer. It depends on Zn(2+) as a cofactor.

The protein resides in the cytoplasm. It catalyses the reaction tRNA(Thr) + L-threonine + ATP = L-threonyl-tRNA(Thr) + AMP + diphosphate + H(+). Its function is as follows. Catalyzes the attachment of threonine to tRNA(Thr) in a two-step reaction: L-threonine is first activated by ATP to form Thr-AMP and then transferred to the acceptor end of tRNA(Thr). Also edits incorrectly charged L-seryl-tRNA(Thr). The polypeptide is Threonine--tRNA ligase (Chelativorans sp. (strain BNC1)).